We begin with the raw amino-acid sequence, 541 residues long: Protein VAPYRIN (541 aa).

Positions 4 to 138 constitute an MSP domain; sequence LIKLDPSNIV…IDSAIKVMFV (135 aa). ANK repeat units lie at residues 176-205, 209-238, 242-271, 275-304, 309-338, 342-372, 374-392, 396-425, 429-458, and 462-491; these read QGQT…DIEA, VGST…NTEG, SVFR…RVDS, DGNT…RTDV, EGDT…TKYV, LGKT…CAAA, KGEV…VING, NGWT…DLDA, DGYT…DVEA, and KGVS…SREG.

Interacts with EX70I at the periarbuscular membrane (PAM) around the arbuscule hyphal tips. As to expression, expressed in roots.

It localises to the cytoplasm. It is found in the nucleus. The protein localises to the cell membrane. Functionally, required for arbuscular mycorrhizal (AM) symbiosis with AM fungi (e.g. Glomus versiforme and Gigaspora gigantea) both during fungal passage across root epidermis and for arbuscule formation in cortical cells; this symbiosis promotes phosphorus (P) and copper (Cu) uptake. Essential for infection by symbiotic nitrogen-fixing rhizobial bacteria (e.g. Sinorhizobium meliloti) leading to the formation of root nodules. The sequence is that of Protein VAPYRIN from Medicago truncatula (Barrel medic).